Consider the following 132-residue polypeptide: Small ribosomal subunit protein uS11 (132 aa).

Residues 1 to 16 (MAAGMKGKRSRRRKER) show a composition bias toward basic residues. Residues 1–20 (MAAGMKGKRSRRRKERKNVE) are disordered.

Belongs to the universal ribosomal protein uS11 family. Part of the 30S ribosomal subunit. Interacts with proteins S7 and S18. Binds to IF-3.

Located on the platform of the 30S subunit, it bridges several disparate RNA helices of the 16S rRNA. Forms part of the Shine-Dalgarno cleft in the 70S ribosome. The chain is Small ribosomal subunit protein uS11 from Clostridium botulinum (strain Hall / ATCC 3502 / NCTC 13319 / Type A).